The following is a 504-amino-acid chain: Anaerobic nitric oxide reductase transcription regulator NorR (504 aa).

Asp-57 is subject to 4-aspartylphosphate. The 230-residue stretch at 187–416 folds into the Sigma-54 factor interaction domain; it reads MIGLSPGMTQ…LEHAIHRAVV (230 aa). Residues 215 to 222 and 278 to 287 each bind ATP; these read GETGTGKE and ADNGTLFLDE. Positions 479–498 form a DNA-binding region, H-T-H motif; the sequence is WAACARMLETDVANLHRLAK.

It functions in the pathway nitrogen metabolism; nitric oxide reduction. Required for the expression of anaerobic nitric oxide (NO) reductase, acts as a transcriptional activator for at least the norVW operon. Activation also requires sigma-54. This chain is Anaerobic nitric oxide reductase transcription regulator NorR, found in Escherichia coli O9:H4 (strain HS).